We begin with the raw amino-acid sequence, 398 residues long: Small ribosomal subunit protein mS29 (398 aa).

The N-terminal 21 residues, 1–21, are a transit peptide targeting the mitochondrion; sequence MMLKGITRLISRIHKLDPGRF. The disordered stretch occupies residues 39–67; the sequence is QVPVESPRAISRTNENDPAKHGDQHEGQH. Positions 52-66 are enriched in basic and acidic residues; sequence NENDPAKHGDQHEGQ. GTP-binding positions include Met100 and 128-135; that span reads GEKGTGKT. N6-acetyllysine is present on residues Lys175 and Lys207.

Belongs to the mitochondrion-specific ribosomal protein mS29 family. As to quaternary structure, component of the mitochondrial small ribosomal subunit (mt-SSU). Mature mammalian 55S mitochondrial ribosomes consist of a small (28S) and a large (39S) subunit. The 28S small subunit contains a 12S ribosomal RNA (12S mt-rRNA) and 30 different proteins. The 39S large subunit contains a 16S rRNA (16S mt-rRNA), a copy of mitochondrial valine transfer RNA (mt-tRNA(Val)), which plays an integral structural role, and 52 different proteins. Interacts with DELE1. Interacts with NOA1. As to expression, ubiquitous.

It localises to the mitochondrion. The enzyme catalyses GTP + H2O = GDP + phosphate + H(+). Functionally, as a component of the mitochondrial small ribosomal subunit, it plays a role in the translation of mitochondrial mRNAs. Involved in mediating interferon-gamma-induced cell death. Displays GTPase activity in vitro. The sequence is that of Small ribosomal subunit protein mS29 from Homo sapiens (Human).